A 413-amino-acid polypeptide reads, in one-letter code: NPL4-like protein 2 (413 aa).

S104 bears the Phosphoserine mark. The region spanning 131-272 is the MPN domain; that stretch reads SVSFDRDAAN…ADVHFEAFQM (142 aa).

Belongs to the NPL4 family.

The protein operates within protein degradation; proteasomal ubiquitin-dependent pathway. In terms of biological role, may be part of a complex that binds ubiquitinated proteins and that is necessary for the export of misfolded proteins from the ER to the cytoplasm, where they are degraded by the proteasome. This is NPL4-like protein 2 from Arabidopsis thaliana (Mouse-ear cress).